The following is a 37-amino-acid chain: Cytochrome b6-f complex subunit 5 (37 aa).

A helical membrane pass occupies residues 5–25 (LLSGIVLGLIPITLAGLFVTA).

The protein belongs to the PetG family. As to quaternary structure, the 4 large subunits of the cytochrome b6-f complex are cytochrome b6, subunit IV (17 kDa polypeptide, PetD), cytochrome f and the Rieske protein, while the 4 small subunits are PetG, PetL, PetM and PetN. The complex functions as a dimer.

The protein localises to the plastid. The protein resides in the chloroplast thylakoid membrane. Its function is as follows. Component of the cytochrome b6-f complex, which mediates electron transfer between photosystem II (PSII) and photosystem I (PSI), cyclic electron flow around PSI, and state transitions. PetG is required for either the stability or assembly of the cytochrome b6-f complex. This is Cytochrome b6-f complex subunit 5 from Chaetosphaeridium globosum (Charophycean green alga).